Consider the following 670-residue polypeptide: DNA ligase (670 aa).

Residues 36 to 40, 84 to 85, and Glu116 contribute to the NAD(+) site; these read DEEYD and SL. Lys118 (N6-AMP-lysine intermediate) is an active-site residue. Residues Arg139, Glu177, Lys293, and Lys317 each coordinate NAD(+). Positions 411, 414, 429, and 434 each coordinate Zn(2+). The region spanning 594 to 670 is the BRCT domain; that stretch reads KKPSPLKGLT…SYEEFLKMLE (77 aa).

The protein belongs to the NAD-dependent DNA ligase family. LigA subfamily. Mg(2+) serves as cofactor. It depends on Mn(2+) as a cofactor.

It catalyses the reaction NAD(+) + (deoxyribonucleotide)n-3'-hydroxyl + 5'-phospho-(deoxyribonucleotide)m = (deoxyribonucleotide)n+m + AMP + beta-nicotinamide D-nucleotide.. In terms of biological role, DNA ligase that catalyzes the formation of phosphodiester linkages between 5'-phosphoryl and 3'-hydroxyl groups in double-stranded DNA using NAD as a coenzyme and as the energy source for the reaction. It is essential for DNA replication and repair of damaged DNA. The chain is DNA ligase from Thermodesulfovibrio yellowstonii (strain ATCC 51303 / DSM 11347 / YP87).